The chain runs to 385 residues: 8-amino-7-oxononanoate synthase (385 aa).

Arg21 is a substrate binding site. Pyridoxal 5'-phosphate is bound at residue 108–109 (GF). His133 lines the substrate pocket. Residues Ser179, His207, and Thr233 each coordinate pyridoxal 5'-phosphate. Lys236 bears the N6-(pyridoxal phosphate)lysine mark. Thr352 is a substrate binding site.

The protein belongs to the class-II pyridoxal-phosphate-dependent aminotransferase family. BioF subfamily. As to quaternary structure, homodimer. The cofactor is pyridoxal 5'-phosphate.

It carries out the reaction 6-carboxyhexanoyl-[ACP] + L-alanine + H(+) = (8S)-8-amino-7-oxononanoate + holo-[ACP] + CO2. Its pathway is cofactor biosynthesis; biotin biosynthesis. Its function is as follows. Catalyzes the decarboxylative condensation of pimeloyl-[acyl-carrier protein] and L-alanine to produce 8-amino-7-oxononanoate (AON), [acyl-carrier protein], and carbon dioxide. This is 8-amino-7-oxononanoate synthase from Salmonella newport (strain SL254).